The sequence spans 360 residues: Peptide chain release factor 1 (360 aa).

Q235 carries the N5-methylglutamine modification. Residues 281 to 307 (ERQRADSERSADRRSQVGSGDRSERIR) show a composition bias toward basic and acidic residues. Positions 281-311 (ERQRADSERSADRRSQVGSGDRSERIRTYNF) are disordered.

The protein belongs to the prokaryotic/mitochondrial release factor family. In terms of processing, methylated by PrmC. Methylation increases the termination efficiency of RF1.

The protein resides in the cytoplasm. In terms of biological role, peptide chain release factor 1 directs the termination of translation in response to the peptide chain termination codons UAG and UAA. The sequence is that of Peptide chain release factor 1 from Rhizobium meliloti (strain 1021) (Ensifer meliloti).